The chain runs to 279 residues: Fructose-1,6-bisphosphatase class 1 (279 aa).

Glutamate 65, aspartate 85, leucine 87, and aspartate 88 together coordinate Mg(2+). Substrate contacts are provided by residues 88–91 (DGSS), tyrosine 190, and lysine 221. Residue glutamate 227 coordinates Mg(2+).

The protein belongs to the FBPase class 1 family. In terms of assembly, homotetramer. Mg(2+) serves as cofactor.

The protein localises to the cytoplasm. It catalyses the reaction beta-D-fructose 1,6-bisphosphate + H2O = beta-D-fructose 6-phosphate + phosphate. Its pathway is carbohydrate biosynthesis; gluconeogenesis. The sequence is that of Fructose-1,6-bisphosphatase class 1 from Helicobacter hepaticus (strain ATCC 51449 / 3B1).